The primary structure comprises 797 residues: Inactive deaminase YBR284W (797 aa).

A helical transmembrane segment spans residues 627–647 (LVYLFYLSQIPMVVAPLNSIV).

This sequence belongs to the metallo-dependent hydrolases superfamily. Adenosine and AMP deaminases family.

It localises to the membrane. In Saccharomyces cerevisiae (strain ATCC 204508 / S288c) (Baker's yeast), this protein is Inactive deaminase YBR284W.